The following is a 534-amino-acid chain: Peptide chain release factor 3 (534 aa).

The tr-type G domain maps to 9 to 278; the sequence is ARRRTFAIIS…FFVEHAPSPQ (270 aa). GTP is bound by residues 18–25, 86–90, and 140–143; these read SHPDAGKT, DTPGH, and NKLD.

Belongs to the TRAFAC class translation factor GTPase superfamily. Classic translation factor GTPase family. PrfC subfamily.

Its subcellular location is the cytoplasm. In terms of biological role, increases the formation of ribosomal termination complexes and stimulates activities of RF-1 and RF-2. It binds guanine nucleotides and has strong preference for UGA stop codons. It may interact directly with the ribosome. The stimulation of RF-1 and RF-2 is significantly reduced by GTP and GDP, but not by GMP. The chain is Peptide chain release factor 3 from Xylella fastidiosa (strain M12).